Consider the following 159-residue polypeptide: RNA pyrophosphohydrolase (159 aa).

One can recognise a Nudix hydrolase domain in the interval 6–149 (GFRPNVGIIL…KREVYRRALK (144 aa)). Residues 38-59 (GGINDRESPEEALYRELNEEVG) carry the Nudix box motif.

The protein belongs to the Nudix hydrolase family. RppH subfamily. Requires a divalent metal cation as cofactor.

Functionally, accelerates the degradation of transcripts by removing pyrophosphate from the 5'-end of triphosphorylated RNA, leading to a more labile monophosphorylated state that can stimulate subsequent ribonuclease cleavage. This is RNA pyrophosphohydrolase from Ectopseudomonas mendocina (strain ymp) (Pseudomonas mendocina).